The primary structure comprises 320 residues: Ferrochelatase (320 aa).

2 residues coordinate Fe cation: His194 and Glu275.

This sequence belongs to the ferrochelatase family.

The protein resides in the cytoplasm. The enzyme catalyses heme b + 2 H(+) = protoporphyrin IX + Fe(2+). Its pathway is porphyrin-containing compound metabolism; protoheme biosynthesis; protoheme from protoporphyrin-IX: step 1/1. In terms of biological role, catalyzes the ferrous insertion into protoporphyrin IX. The polypeptide is Ferrochelatase (Xylella fastidiosa (strain 9a5c)).